The following is a 56-amino-acid chain: TauPI-stichotoxin-Hcr2d (56 aa).

Positions 4–54 (CLEPKVVGPCTAYFPRFYFNSETGKCTPFIYGGCEGNGNNFETLRACRGIC) constitute a BPTI/Kunitz inhibitor domain. 3 disulfides stabilise this stretch: Cys4-Cys54, Cys13-Cys37, and Cys29-Cys50.

It belongs to the venom Kunitz-type family. Sea anemone type 2 potassium channel toxin subfamily.

It is found in the secreted. The protein localises to the nematocyst. Functionally, this protease inhibitor shows two different activities, it inhibits both the capsaicin receptor TRPV1 and serine proteases. It partially blocks the capsaicin- and acid-induced response of TRPV1, a receptor of the pain pathway. It also weakly inhibits trypsin and chymotrypsin activity (Ki=0.5 uM and Ki=7 uM, respectively). In addition, it may also alter tachykinin levels by suppressing endogenous proteases. In vivo, it shows antinociceptive and analgesic activities. It significantly prolongs paw withdrawal latency and blocks heat-induced and chemical-induced acute pain. In addition, it also shows anti-inflammatory and analgesic effects in models of osteoarthritis and rheumatoid arthritis. In vivo, unlike other TRPV1 antagonists whose activity is associated with hyperthermia, this protein has the remarkable feature of dropping core body temperature. The chain is TauPI-stichotoxin-Hcr2d from Radianthus crispa (Leathery sea anemone).